We begin with the raw amino-acid sequence, 133 residues long: Putative dispanin subfamily A member 2d (133 aa).

Residues 1–57 (MNHTVQTFFSPVNSGQPPNYEMLKEEHKVAVLGVPHNPAPPTSTVIHIRSKTSVPHH) lie on the Extracellular side of the membrane. Lysine 24 is covalently cross-linked (Glycyl lysine isopeptide (Lys-Gly) (interchain with G-Cter in ubiquitin)). The helical transmembrane segment at 58 to 78 (VVWSLFNTLFMNPCCLGFIAF) threads the bilayer. The Cytoplasmic segment spans residues 79-107 (AYSVKSRDRKMVGNVTGAQAYASTTKCLN). Glycyl lysine isopeptide (Lys-Gly) (interchain with G-Cter in ubiquitin) cross-links involve residues lysine 83, lysine 88, and lysine 104. Residues 108 to 128 (IWALILGILMTILLIIIPVLI) traverse the membrane as a helical segment. The Extracellular portion of the chain corresponds to 129–133 (FQAHR).

Belongs to the CD225/Dispanin family.

The protein localises to the membrane. The chain is Putative dispanin subfamily A member 2d from Homo sapiens (Human).